We begin with the raw amino-acid sequence, 230 residues long: MGQQISDQTQLVLNKLPEKVAKHVMLVRESGSLTYEEFLGRVAELNDVTAKVASGQEKHLLFEVQPGSDSSAFWKVVVRVVCTKINKSSGIVEASRIMNLYQFIQLYKDITSQAAGVLAQSSTSEDADENSASVTSCQASLWMGRVKQLTDEEECCICMDGRADLILPCAHSFCQKCIDKWSDRHRNCPICRLQMTGANESWVVSDAPTEDDMANYILNMADEAGQPHRP.

Residue glycine 2 is the site of N-myristoyl glycine attachment. The segment at 155 to 192 (CCICMDGRADLILPCAHSFCQKCIDKWSDRHRNCPICR) adopts an RING-type zinc-finger fold.

It is found in the membrane. Functionally, may be involved in spermatogenesis. In Bos taurus (Bovine), this protein is RING finger protein 141 (RNF141).